Reading from the N-terminus, the 323-residue chain is Aquaporin NIP3-1 (323 aa).

Met1 carries the post-translational modification N-acetylmethionine. The next 2 membrane-spanning stretches (helical) occupy residues 45–65 (LIGE…AIVV) and 73–93 (VTLP…IYSI). The NPA 1 signature appears at 102–104 (NPA). A run of 3 helical transmembrane segments spans residues 122–142 (GYIA…RLVF), 167–187 (TSFV…SAVA), and 196–216 (FAGI…GPIS). An NPA 2 motif is present at residues 221–223 (NPA). The chain crosses the membrane as a helical span at residues 239–259 (WLYIVSPVIGALSGAWTYGLL).

It belongs to the MIP/aquaporin (TC 1.A.8) family. NIP (TC 1.A.8.12) subfamily.

It localises to the membrane. Functionally, aquaporins facilitate the transport of water and small neutral solutes across cell membranes. The polypeptide is Aquaporin NIP3-1 (NIP3-1) (Arabidopsis thaliana (Mouse-ear cress)).